The chain runs to 233 residues: Large ribosomal subunit protein uL1 (233 aa).

The protein belongs to the universal ribosomal protein uL1 family. In terms of assembly, part of the 50S ribosomal subunit.

Its function is as follows. Binds directly to 23S rRNA. The L1 stalk is quite mobile in the ribosome, and is involved in E site tRNA release. In terms of biological role, protein L1 is also a translational repressor protein, it controls the translation of the L11 operon by binding to its mRNA. The polypeptide is Large ribosomal subunit protein uL1 (Trichlorobacter lovleyi (strain ATCC BAA-1151 / DSM 17278 / SZ) (Geobacter lovleyi)).